A 481-amino-acid polypeptide reads, in one-letter code: Glucokinase-1 (481 aa).

Residues 4–477 enclose the Hexokinase domain; the sequence is PKLTKAVDSI…SGVGAALCAL (474 aa). Positions 64–204 are hexokinase small subdomain; that stretch reads SGQEHGVTML…LSNVHVVALT (141 aa). An ATP-binding site is contributed by Lys-101. The tract at residues 146 to 172 is glucose-binding; that stretch reads KMGFTFSYPVDQTSLSSGKLIRWTKGF. The interval 205–466 is hexokinase large subdomain; it reads NDTTGTLLAR…RDVHLRISKD (262 aa). 466–471 is a binding site for ATP; it reads DGSGVG.

It belongs to the hexokinase family.

It carries out the reaction D-glucose + ATP = D-glucose 6-phosphate + ADP + H(+). The enzyme catalyses a D-hexose + ATP = a D-hexose 6-phosphate + ADP + H(+). The catalysed reaction is D-mannose + ATP = D-mannose 6-phosphate + ADP + H(+). Its pathway is carbohydrate metabolism; hexose metabolism. The protein operates within carbohydrate degradation; glycolysis; D-glyceraldehyde 3-phosphate and glycerone phosphate from D-glucose: step 1/4. Its function is as follows. Glukokinase specific for aldohexoses. Phosphorylates glucose and mannose, but not fructose. The polypeptide is Glucokinase-1 (GLK1) (Kluyveromyces lactis (strain ATCC 8585 / CBS 2359 / DSM 70799 / NBRC 1267 / NRRL Y-1140 / WM37) (Yeast)).